Reading from the N-terminus, the 141-residue chain is Hemoglobin subunit alpha-A (141 aa).

The 141-residue stretch at 1–141 (VLSASDKTNV…VAKELTAKYR (141 aa)) folds into the Globin domain. H58 lines the O2 pocket. Residue H87 participates in heme b binding.

Belongs to the globin family. As to quaternary structure, heterotetramer of two alpha chains and two beta chains. In terms of tissue distribution, red blood cells.

Involved in oxygen transport from the lung to the various peripheral tissues. This chain is Hemoglobin subunit alpha-A (HBAA), found in Phalacrocorax carbo (Great cormorant).